A 528-amino-acid polypeptide reads, in one-letter code: Potassium voltage-gated channel subfamily A member 3 (528 aa).

A disordered region spans residues 1–32 (MTVVPGDHLLEPEAAGGGGGDPPQGGCGSGGG). Topologically, residues 1–187 (MTVVPGDHLL…EYPESSGPAR (187 aa)) are cytoplasmic. The span at 15-32 (AGGGGGDPPQGGCGSGGG) shows a compositional bias: gly residues. The chain crosses the membrane as a helical span at residues 188-206 (GIAIVSVLVILISIVIFCL). Residues 207-247 (ETLPEFRDEKDYPASPSQDVFEAANNSTSGAPSGASSFSDP) are Extracellular-facing. Asn232 is a glycosylation site (N-linked (GlcNAc...) asparagine). Residues 248–269 (FFVVETLCIIWFSFELLVRFFA) traverse the membrane as a helical segment. The S-palmitoyl cysteine moiety is linked to residue Cys270. Over 270-280 (CPSKATFSRNI) the chain is Cytoplasmic. A helical transmembrane segment spans residues 281–301 (MNLIDIVAIIPYFITLGTELA). Residues 302 to 315 (ERQGNGQQAMSLAI) lie on the Extracellular side of the membrane. Residues 316–334 (LRVIRLVRVFRIFKLSRHS) form a helical; Voltage-sensor membrane-spanning segment. Residues 335 to 350 (KGLQILGQTLKASMRE) are Cytoplasmic-facing. The helical transmembrane segment at 351 to 370 (LGLLIFFLFIGVILFSSAVY) threads the bilayer. Residues 371–411 (FAEADDPSSGFNSIPDAFWWAVVTMTTVGYGDMHPVTIGGK) lie on the Extracellular side of the membrane. Residues 397-402 (TVGYGD) carry the Selectivity filter motif. Residues 412-434 (IVGSLCAIAGVLTIALPVPVIVS) traverse the membrane as a helical segment. The Cytoplasmic portion of the chain corresponds to 435 to 528 (NFNYFYHRET…VNIKKIFTDV (94 aa)). Positions 435 to 528 (NFNYFYHRET…VNIKKIFTDV (94 aa)) are interaction with KCNE4. The residue at position 452 (Tyr452) is a Phosphotyrosine. The residue at position 473 (Ser473) is a Phosphoserine; by PKA. Residues 526 to 528 (TDV) carry the PDZ-binding motif.

This sequence belongs to the potassium channel family. A (Shaker) (TC 1.A.1.2) subfamily. Kv1.3/KCNA3 sub-subfamily. As to quaternary structure, homotetramer. Forms heterooligomers with KCNE4 which inhibits KCNA3 activity by impairing localization to the cell membrane. The stoichiometry of KCNA3 and KCNE4 in the heterooligomers are 4:1, 4:2, 4:3 or 4:4 respectively. Increasing the number of KCNE4 subunits steadily slows the activation KCNA3 and decreases its abundance at the cell membrane. However, a single subunit of KCNE4 is sufficient for the cooperative enhancement of the inactivating function of the channel. Interacts with SEC24D; this interaction is reduced in the presence of KCNE4. Interacts with DLG1, DLG2 and DLG4 via their PDZ domains. Post-translationally, N-glycosylation promotes the cell surface expression. Phosphorylation on Tyr-452 inhibits its channel activity.

The protein resides in the cell membrane. It carries out the reaction K(+)(in) = K(+)(out). Activity is up-regulated by JAK2. Mediates the voltage-dependent potassium ion permeability of excitable membranes. Assuming opened or closed conformations in response to the voltage difference across the membrane, the protein forms a potassium-selective channel through which potassium ions may pass in accordance with their electrochemical gradient. This is Potassium voltage-gated channel subfamily A member 3 (Kcna3) from Mus musculus (Mouse).